The sequence spans 321 residues: L-carnitine dehydrogenase (321 aa).

Glycine 14–glycine 19 contributes to the NAD(+) binding site.

The protein belongs to the 3-hydroxyacyl-CoA dehydrogenase family. L-carnitine dehydrogenase subfamily. Homodimer.

The protein localises to the cytoplasm. It carries out the reaction carnitine + NAD(+) = 3-dehydrocarnitine + NADH + H(+). Its pathway is amine and polyamine metabolism; carnitine metabolism. Its activity is regulated as follows. Analogs of L-carnitine such as D-carnitine, glycine betaine and choline, are competitive inhibitors of L-carnitine oxidation. Functionally, catalyzes the NAD(+)-dependent oxidation of L-carnitine to 3-dehydrocarnitine. Is specific for L-carnitine and NAD(+) as substrates. D,L-3-hydroxybutyrate, L-lactate, ethanol, L-malate and D,L-isocitrate are not substrates. Is involved in a L-carnitine degradation pathway that allows P.aeruginosa to grow on L-carnitine as the sole source of carbon and nitrogen. This chain is L-carnitine dehydrogenase, found in Pseudomonas aeruginosa (strain ATCC 15692 / DSM 22644 / CIP 104116 / JCM 14847 / LMG 12228 / 1C / PRS 101 / PAO1).